The following is a 390-amino-acid chain: Lipid droplet-regulating VLDL assembly factor AUP1 homolog (390 aa).

Over 1 to 32 the chain is Cytoplasmic; that stretch reads MASPEASSSGNTEDLRIEDLFHQKRNEDTIAK. Residues 33–53 lie within the membrane without spanning it; it reads IFSIIYAPVGLIILLIRVFLG. Residues 54 to 390 are Cytoplasmic-facing; it reads FHTFIVACLL…NRQKYMNRDS (337 aa). In terms of domain architecture, CUE spans 305–347; that stretch reads QMDECAMRIKQSFPSFHLSAIRRDLEKTRSQTTTVNNLKAGKI.

Belongs to the AUP1 family.

The protein localises to the endoplasmic reticulum membrane. It is found in the lipid droplet. This Caenorhabditis elegans protein is Lipid droplet-regulating VLDL assembly factor AUP1 homolog.